The following is a 212-amino-acid chain: Thiamine-phosphate synthase (212 aa).

4-amino-2-methyl-5-(diphosphooxymethyl)pyrimidine is bound by residues 35 to 39 and Asn-67; that span reads QLRDK. Residues Asp-68 and Asp-87 each contribute to the Mg(2+) site. Ser-106 is a binding site for 4-amino-2-methyl-5-(diphosphooxymethyl)pyrimidine. 2-[(2R,5Z)-2-carboxy-4-methylthiazol-5(2H)-ylidene]ethyl phosphate is bound at residue 132–134; the sequence is TGS. Residue Lys-135 participates in 4-amino-2-methyl-5-(diphosphooxymethyl)pyrimidine binding. 2-[(2R,5Z)-2-carboxy-4-methylthiazol-5(2H)-ylidene]ethyl phosphate contacts are provided by residues Gly-163 and 183 to 184; that span reads IS.

It belongs to the thiamine-phosphate synthase family. Mg(2+) serves as cofactor.

The enzyme catalyses 2-[(2R,5Z)-2-carboxy-4-methylthiazol-5(2H)-ylidene]ethyl phosphate + 4-amino-2-methyl-5-(diphosphooxymethyl)pyrimidine + 2 H(+) = thiamine phosphate + CO2 + diphosphate. The catalysed reaction is 2-(2-carboxy-4-methylthiazol-5-yl)ethyl phosphate + 4-amino-2-methyl-5-(diphosphooxymethyl)pyrimidine + 2 H(+) = thiamine phosphate + CO2 + diphosphate. It catalyses the reaction 4-methyl-5-(2-phosphooxyethyl)-thiazole + 4-amino-2-methyl-5-(diphosphooxymethyl)pyrimidine + H(+) = thiamine phosphate + diphosphate. It functions in the pathway cofactor biosynthesis; thiamine diphosphate biosynthesis; thiamine phosphate from 4-amino-2-methyl-5-diphosphomethylpyrimidine and 4-methyl-5-(2-phosphoethyl)-thiazole: step 1/1. In terms of biological role, condenses 4-methyl-5-(beta-hydroxyethyl)thiazole monophosphate (THZ-P) and 2-methyl-4-amino-5-hydroxymethyl pyrimidine pyrophosphate (HMP-PP) to form thiamine monophosphate (TMP). In Methanocella arvoryzae (strain DSM 22066 / NBRC 105507 / MRE50), this protein is Thiamine-phosphate synthase.